A 726-amino-acid chain; its full sequence is Catalase-peroxidase (726 aa).

The disordered stretch occupies residues Met1–Ser33. The tryptophyl-tyrosyl-methioninium (Trp-Tyr) (with M-252) cross-link spans Trp105–Tyr226. The active-site Proton acceptor is His106. The segment at residues Tyr226–Met252 is a cross-link (tryptophyl-tyrosyl-methioninium (Tyr-Met) (with W-105)). His267 contacts heme b.

The protein belongs to the peroxidase family. Peroxidase/catalase subfamily. As to quaternary structure, homodimer or homotetramer. Heme b serves as cofactor. Post-translationally, formation of the three residue Trp-Tyr-Met cross-link is important for the catalase, but not the peroxidase activity of the enzyme.

The catalysed reaction is H2O2 + AH2 = A + 2 H2O. It catalyses the reaction 2 H2O2 = O2 + 2 H2O. Its function is as follows. Bifunctional enzyme with both catalase and broad-spectrum peroxidase activity. In Salmonella paratyphi B (strain ATCC BAA-1250 / SPB7), this protein is Catalase-peroxidase.